Consider the following 655-residue polypeptide: Putative esterase (655 aa).

A helical transmembrane segment spans residues 9 to 29 (VLSLTLIYISISIGFSVYFYV). Asparagine 71, asparagine 89, asparagine 101, asparagine 185, asparagine 386, asparagine 449, and asparagine 512 each carry an N-linked (GlcNAc...) asparagine; by host glycan. Histidine 515 serves as the catalytic Charge relay system. N-linked (GlcNAc...) asparagine; by host glycosylation is found at asparagine 527 and asparagine 597.

This sequence belongs to the type-B carboxylesterase/lipase family.

The protein resides in the membrane. It catalyses the reaction a carboxylic ester + H2O = an alcohol + a carboxylate + H(+). The chain is Putative esterase from Noctuidae (owlet moths).